Here is a 286-residue protein sequence, read N- to C-terminus: Ribosomal RNA small subunit methyltransferase A (286 aa).

S-adenosyl-L-methionine-binding residues include asparagine 28, leucine 30, glycine 55, glutamate 77, aspartate 103, and asparagine 123.

It belongs to the class I-like SAM-binding methyltransferase superfamily. rRNA adenine N(6)-methyltransferase family. RsmA subfamily.

It is found in the cytoplasm. It catalyses the reaction adenosine(1518)/adenosine(1519) in 16S rRNA + 4 S-adenosyl-L-methionine = N(6)-dimethyladenosine(1518)/N(6)-dimethyladenosine(1519) in 16S rRNA + 4 S-adenosyl-L-homocysteine + 4 H(+). Specifically dimethylates two adjacent adenosines (A1518 and A1519) in the loop of a conserved hairpin near the 3'-end of 16S rRNA in the 30S particle. May play a critical role in biogenesis of 30S subunits. The chain is Ribosomal RNA small subunit methyltransferase A from Bradyrhizobium sp. (strain ORS 278).